A 485-amino-acid chain; its full sequence is Glutamate--tRNA ligase (485 aa).

The 'HIGH' region motif lies at 11-21 (PSPTGHLHIGN). Positions 252-256 (KLSKR) match the 'KMSKS' region motif. Residue Lys255 coordinates ATP.

This sequence belongs to the class-I aminoacyl-tRNA synthetase family. Glutamate--tRNA ligase type 1 subfamily. In terms of assembly, monomer.

Its subcellular location is the cytoplasm. The catalysed reaction is tRNA(Glu) + L-glutamate + ATP = L-glutamyl-tRNA(Glu) + AMP + diphosphate. In terms of biological role, catalyzes the attachment of glutamate to tRNA(Glu) in a two-step reaction: glutamate is first activated by ATP to form Glu-AMP and then transferred to the acceptor end of tRNA(Glu). This Bacillus mycoides (strain KBAB4) (Bacillus weihenstephanensis) protein is Glutamate--tRNA ligase.